Here is a 493-residue protein sequence, read N- to C-terminus: Extracellular tyrosine-protein kinase PKDCC (493 aa).

An N-terminal signal peptide occupies residues 1-32 (MRRRRAAVAAGFCASFLLGSVLNVLFAPGSEP). Positions 28–128 (PGSEPPRPGQ…PGPGSPGPGP (101 aa)) are disordered. Pro residues predominate over residues 30–46 (SEPPRPGQSPEPSPAPG). Basic and acidic residues predominate over residues 52–69 (GRGELARQIRARYEEVQR). 2 stretches are compositionally biased toward pro residues: residues 95 to 105 (PGLPRPRPPWA) and 114 to 127 (GWPP…PGPG). N137 is a glycosylation site (N-linked (GlcNAc...) asparagine). Positions 138–493 (VSGAQYMGSG…NKTTYVKASG (356 aa)) constitute a Protein kinase domain. ATP is bound by residues 144-152 (MGSGYTKAV) and K166. The residue at position 148 (Y148) is a Phosphotyrosine. A Phosphoserine modification is found at S177. The active-site Proton acceptor is D278. N-linked (GlcNAc...) asparagine glycans are attached at residues N320, N369, N400, N460, and N484.

This sequence belongs to the protein kinase superfamily. In terms of processing, N-glycosylated. Post-translationally, phosphorylated on tyrosines; probably via autophosphorylation. In terms of tissue distribution, highly expressed in platelets.

The protein localises to the secreted. It localises to the golgi apparatus. The catalysed reaction is L-tyrosyl-[protein] + ATP = O-phospho-L-tyrosyl-[protein] + ADP + H(+). Secreted tyrosine-protein kinase that mediates phosphorylation of extracellular proteins and endogenous proteins in the secretory pathway, which is essential for patterning at organogenesis stages. Mediates phosphorylation of MMP1, MMP13, MMP14, MMP19 and ERP29. Probably plays a role in platelets: rapidly and quantitatively secreted from platelets in response to stimulation of platelet degranulation. May also have serine/threonine protein kinase activity. Required for longitudinal bone growth through regulation of chondrocyte differentiation. May be indirectly involved in protein transport from the Golgi apparatus to the plasma membrane. This chain is Extracellular tyrosine-protein kinase PKDCC, found in Homo sapiens (Human).